The chain runs to 114 residues: UPF0339 protein PM0519 (114 aa).

Repeat copies occupy residues A11–V59 and A62–L110.

This sequence belongs to the UPF0339 family. Duplicated subfamily.

The sequence is that of UPF0339 protein PM0519 from Pasteurella multocida (strain Pm70).